The sequence spans 268 residues: Sexual development regulator velC (268 aa).

A compositionally biased stretch (basic and acidic residues) spans 1-13; that stretch reads MPHGFDKLLHPEP. 2 disordered regions span residues 1–124 and 142–165; these read MPHG…DNFS and DPDP…NPPH. Pro residues predominate over residues 14–26; the sequence is EPQSPSPPPPPRR. The Velvet domain occupies 28 to 257; sequence STQSRYHLHI…ELGFVELKTR (230 aa). Residues 92 to 121 show a composition bias toward basic and acidic residues; that stretch reads DGNRDREREREHERERERERETDGVARTDD.

The protein belongs to the velvet family. VelC subfamily. In terms of assembly, interacts with velA and vosA.

The protein resides in the nucleus. In terms of biological role, velvet-domain-containing protein that acts as a positive regulator of sexual development. This is Sexual development regulator velC from Penicillium rubens (strain ATCC 28089 / DSM 1075 / NRRL 1951 / Wisconsin 54-1255) (Penicillium chrysogenum).